Here is a 798-residue protein sequence, read N- to C-terminus: Integrin beta-1 (798 aa).

Residues 1 to 20 form the signal peptide; it reads MNLQLIFWIGLISSVCYVFG. Residues 21-728 lie on the Extracellular side of the membrane; that stretch reads QADENRCLKA…ETPECPTGPD (708 aa). The region spanning 26 to 76 is the PSI domain; sequence RCLKANAKSCGECIQAGPNCGWCTNSTFLQEGMPTSARCDDLEALRKKGCH. 28 disulfides stabilise this stretch: C27–C45, C35–C464, C38–C64, C48–C75, C207–C213, C261–C301, C401–C415, C435–C462, C466–C486, C477–C489, C491–C500, C502–C533, C516–C531, C525–C536, C538–C553, C555–C576, C560–C574, C568–C579, C581–C590, C592–C615, C599–C613, C607–C618, C620–C630, C633–C636, C640–C691, C646–C665, C649–C661, and C699–C723. Residue N50 is glycosylated (N-linked (GlcNAc...) asparagine). Positions 75–84 are enriched in basic and acidic residues; that stretch reads CHPDDIENPR. Residues 75-107 are disordered; that stretch reads CHPDDIENPRGSKNIKKNKNVTNRSKGTAEKLQ. N-linked (GlcNAc...) asparagine glycosylation is found at N94 and N97. The region spanning 140–378 is the VWFA domain; that stretch reads DYPIDLYYLM…QLIIDAYNSL (239 aa). Mg(2+) contacts are provided by S152 and S154. Residues S154, D157, D158, and E189 each coordinate Ca(2+). The segment at 207-213 is CX3CL1-binding; the sequence is CTSEQNC. N-linked (GlcNAc...) asparagine glycosylation occurs at N212. Residues N244, D246, P248, and E249 each coordinate Ca(2+). Residue E249 coordinates Mg(2+). N-linked (GlcNAc...) asparagine glycosylation occurs at N269. A CX3CL1-binding region spans residues 295 to 314; sequence LPNDGHCHLENDVYTMSHYY. A362 contributes to the Ca(2+) binding site. N-linked (GlcNAc...) asparagine glycans are attached at residues N363, N406, and N417. An interaction with TMEM182 region spans residues 383–465; the sequence is ILENSKLPEG…IILQFICECE (83 aa). I-EGF domains follow at residues 466-501, 502-554, 555-591, and 592-631; these read CQSEGIPSSPKCHDGNGTFECGACRCNEGRVGRHCE, CSTD…KFCE, CDNFNCDRSNGLICGGNGVCKCRVCECNPNYTGSACD, and CSLDTTSCMAVNGQICNGRGVCECGVCKCTDPKFQGPTCE. N481 carries an N-linked (GlcNAc...) asparagine glycan. The N-linked (GlcNAc...) asparagine glycan is linked to N520. N-linked (GlcNAc...) asparagine glycosylation occurs at N584. N669 is a glycosylation site (N-linked (GlcNAc...) asparagine). The chain crosses the membrane as a helical span at residues 729–749; sequence IIPIVAGVVAGIVLIGLALLL. The Cytoplasmic portion of the chain corresponds to 750 to 798; sequence IWKLLMIIHDRREFAKFEKEKMNAKWDTGENPIYKSAVTTVVNPKYEGK. Positions 762–767 are signal for sorting from recycling endosomes; interaction with ACAP1; that stretch reads EFAKFE. Residue T777 is modified to Phosphothreonine. Position 783 is a phosphotyrosine (Y783). Residue S785 is modified to Phosphoserine. The interaction with ITGB1BP1 stretch occupies residues 785 to 792; it reads SAVTTVVN. Position 789 is a phosphothreonine (T789). Position 794 is an N6-acetyllysine; alternate (K794). A Glycyl lysine isopeptide (Lys-Gly) (interchain with G-Cter in SUMO1); alternate cross-link involves residue K794.

This sequence belongs to the integrin beta chain family. As to quaternary structure, interacts with seprase FAP (seprase); the interaction occurs at the cell surface of invadopodia membrane in a collagen-dependent manner. Heterodimer of an alpha and a beta subunit. Beta-1 associates with either alpha-1, alpha-2, alpha-3, alpha-4, alpha-5, alpha-6, alpha-7, alpha-8, alpha-9, alpha-10, alpha-11 or alpha-V. ITGA6:ITGB1 is found in a complex with CD9; interaction takes place in oocytes and is involved in sperm-egg fusion. Binds LGALS3BP and NMRK2, when associated with alpha-7, but not with alpha-5. Interacts with FLNA, FLNB, FLNC and RANBP9. Interacts with KRT1 in the presence of RACK1 and SRC. Interacts with JAML; integrin alpha-4/beta-1 may regulate leukocyte to endothelial cells adhesion by controlling JAML homodimerization. Interacts with RAB21. Interacts (via the cytoplasmic region) with RAB25 (via the hypervariable C-terminal region). Interacts with MYO10. Interacts with ITGB1BP1 (via C-terminal region); the interaction is a prerequisite for focal adhesion disassembly. Interacts with TLN1; the interaction is prevented by competitive binding of ITGB1BP1. Interacts with ACAP1; required for ITGB1 recycling. Interacts with ASAP3. Interacts with FERMT2; the interaction is inhibited in presence of ITGB1BP1. Interacts with DAB2. Interacts with FGR and HCK. Interacts with alpha-7A and alpha-7B in adult skeletal muscle. Interacts with alpha-7B in cardiomyocytes of adult heart. Interacts with EMP2; the interaction may be direct or indirect and ITGB1 has a heterodimer form. ITGA5:ITGB1 interacts with CCN3. ITGA4:ITGB1 is found in a ternary complex with CX3CR1 and CX3CL1. ITGA5:ITGB1 interacts with FBN1. ITGA5:ITGB1 interacts with IL1B. Interacts with MDK. ITGA4:ITGB1 interacts with MDK; this interaction mediates MDK-induced osteoblast cells migration through PXN phosphorylation. ITGA6:ITGB1 interacts with MDK; this interaction mediates MDK-induced neurite-outgrowth. ITGA5:ITGB1 interacts with ACE2. Interacts with TMEM182 and LAMB1. Interacts with tensin TNS3; TNS3 also interacts with PEAK1, thus acting as an adapter molecule to bridge the association of PEAK1 with ITGB1. Interacts with tensin TNS4; the interaction displaces tensin TNS3 from the ITGB1 cytoplasmic tail and promotes ITGB1 stability. Integrin ITGA9:ITGB1 interacts with SPP1/OPN (via N-terminus). Integrin ITGA9:ITGB1 interacts with TNC/TNFN3 (via the 3rd Fibronectin type-III domain). Integrins ITGA4:ITGB1 and ITGA9:ITGB1 interact with SVEP1 (via Sushi domain 21); thereby inhibit Ca(2+) intracellular signaling and as a result repress vasocontraction. ITGA4:ITGB1 and ITGA5:ITGB1 interacts with SELP. Interacts with CD248. ITGA5:ITGB1 interacts with IGFBP1. ITGA4:ITGB1 interacts with BCAM. Interacts with ADGRG6. Expressed in the spleen, thymus, alveolar macrophages, bone marrow, liver and kidney.

The protein localises to the cell membrane. The protein resides in the cell projection. Its subcellular location is the invadopodium membrane. It is found in the ruffle membrane. It localises to the recycling endosome. The protein localises to the melanosome. The protein resides in the lamellipodium. Its subcellular location is the ruffle. It is found in the cell junction. It localises to the focal adhesion. Its function is as follows. Integrins alpha-1/beta-1, alpha-2/beta-1, alpha-10/beta-1 and alpha-11/beta-1 are receptors for collagen. Integrins alpha-1/beta-1 and alpha-2/beta-2 recognize the proline-hydroxylated sequence G-F-P-G-E-R in collagen. Integrins alpha-2/beta-1, alpha-3/beta-1, alpha-4/beta-1, alpha-5/beta-1, alpha-8/beta-1, alpha-10/beta-1, alpha-11/beta-1 and alpha-V/beta-1 are receptors for fibronectin. Alpha-4/beta-1 recognizes one or more domains within the alternatively spliced CS-1 and CS-5 regions of fibronectin. Integrin alpha-5/beta-1 is a receptor for fibrinogen. Integrin alpha-1/beta-1, alpha-2/beta-1, alpha-6/beta-1 and alpha-7/beta-1 are receptors for lamimin. Integrin alpha-6/beta-1 (ITGA6:ITGB1) is present in oocytes and is involved in sperm-egg fusion. Integrin alpha-4/beta-1 is a receptor for VCAM1 and recognizes the sequence Q-I-D-S in VCAM1. Integrin alpha-9/beta-1 is a receptor for VCAM1, cytotactin and osteopontin. It recognizes the sequence A-E-I-D-G-I-E-L in cytotactin. Integrin alpha-3/beta-1 is a receptor for epiligrin, thrombospondin and CSPG4. Integrin alpha-3/beta-1 provides a docking site for FAP (seprase) at invadopodia plasma membranes in a collagen-dependent manner and hence may participate in the adhesion, formation of invadopodia and matrix degradation processes, promoting cell invasion. Alpha-3/beta-1 may mediate with LGALS3 the stimulation by CSPG4 of endothelial cells migration. Integrin alpha-V/beta-1 is a receptor for vitronectin. Beta-1 integrins recognize the sequence R-G-D in a wide array of ligands. When associated with alpha-7/beta-1 integrin, regulates cell adhesion and laminin matrix deposition. Involved in promoting endothelial cell motility and angiogenesis. Involved in osteoblast compaction through the fibronectin fibrillogenesis cell-mediated matrix assembly process and the formation of mineralized bone nodules. May be involved in up-regulation of the activity of kinases such as PKC via binding to KRT1. Together with KRT1 and RACK1, serves as a platform for SRC activation or inactivation. Plays a mechanistic adhesive role during telophase, required for the successful completion of cytokinesis. ITGA4:ITGB1 binds to fractalkine (CX3CL1) and may act as its coreceptor in CX3CR1-dependent fractalkine signaling. ITGA4:ITGB1 and ITGA5:ITGB1 bind to PLA2G2A via a site (site 2) which is distinct from the classical ligand-binding site (site 1) and this induces integrin conformational changes and enhanced ligand binding to site 1. ITGA5:ITGB1 acts as a receptor for fibrillin-1 (FBN1) and mediates R-G-D-dependent cell adhesion to FBN1. ITGA5:ITGB1 acts as a receptor for fibronectin FN1 and mediates R-G-D-dependent cell adhesion to FN1. ITGA5:ITGB1 is a receptor for IL1B and binding is essential for IL1B signaling. ITGA5:ITGB3 is a receptor for soluble CD40LG and is required for CD40/CD40LG signaling. Plays an important role in myoblast differentiation and fusion during skeletal myogenesis. ITGA9:ITGB1 may play a crucial role in SVEP1/polydom-mediated myoblast cell adhesion. Integrins ITGA9:ITGB1 and ITGA4:ITGB1 repress PRKCA-mediated L-type voltage-gated channel Ca(2+) influx and ROCK-mediated calcium sensitivity in vascular smooth muscle cells via their interaction with SVEP1, thereby inhibit vasocontraction. This Sus scrofa (Pig) protein is Integrin beta-1 (ITGB1).